The primary structure comprises 263 residues: 3-methyl-2-oxobutanoate hydroxymethyltransferase (263 aa).

2 residues coordinate Mg(2+): D45 and D84. 3-methyl-2-oxobutanoate is bound by residues 45–46 (DS), D84, and K112. E114 is a binding site for Mg(2+). E181 (proton acceptor) is an active-site residue.

It belongs to the PanB family. As to quaternary structure, homodecamer; pentamer of dimers. The cofactor is Mg(2+).

It localises to the cytoplasm. It catalyses the reaction 3-methyl-2-oxobutanoate + (6R)-5,10-methylene-5,6,7,8-tetrahydrofolate + H2O = 2-dehydropantoate + (6S)-5,6,7,8-tetrahydrofolate. The protein operates within cofactor biosynthesis; (R)-pantothenate biosynthesis; (R)-pantoate from 3-methyl-2-oxobutanoate: step 1/2. Its function is as follows. Catalyzes the reversible reaction in which hydroxymethyl group from 5,10-methylenetetrahydrofolate is transferred onto alpha-ketoisovalerate to form ketopantoate. The protein is 3-methyl-2-oxobutanoate hydroxymethyltransferase of Buchnera aphidicola subsp. Schizaphis graminum (strain Sg).